Consider the following 191-residue polypeptide: Ribosome maturation factor RimM (191 aa).

The PRC barrel domain occupies 102-185; the sequence is EEEYHVSQLI…RIEINPPKGL (84 aa).

This sequence belongs to the RimM family. As to quaternary structure, binds ribosomal protein uS19.

Its subcellular location is the cytoplasm. Functionally, an accessory protein needed during the final step in the assembly of 30S ribosomal subunit, possibly for assembly of the head region. Essential for efficient processing of 16S rRNA. May be needed both before and after RbfA during the maturation of 16S rRNA. It has affinity for free ribosomal 30S subunits but not for 70S ribosomes. In Crocosphaera subtropica (strain ATCC 51142 / BH68) (Cyanothece sp. (strain ATCC 51142)), this protein is Ribosome maturation factor RimM.